We begin with the raw amino-acid sequence, 86 residues long: Small ribosomal subunit protein bS20 (86 aa).

A disordered region spans residues 1 to 25 (MANIKSQIKRIRTNEKARQRNKAYK). The segment covering 12–25 (RTNEKARQRNKAYK) has biased composition (basic and acidic residues).

Belongs to the bacterial ribosomal protein bS20 family.

Functionally, binds directly to 16S ribosomal RNA. In Beutenbergia cavernae (strain ATCC BAA-8 / DSM 12333 / CCUG 43141 / JCM 11478 / NBRC 16432 / NCIMB 13614 / HKI 0122), this protein is Small ribosomal subunit protein bS20.